The primary structure comprises 331 residues: Taste receptor type 2 member 38 (331 aa).

At 1–17 (MLTLTPVLTVSYEAKIS) the chain is on the extracellular side. Residues 18–38 (FLFLSVVEFAVGIMANAFIVL) traverse the membrane as a helical segment. Topologically, residues 39 to 54 (VNFWDMVKKQPLNNCD) are cytoplasmic. Residues 55-75 (IALLCLSITRLFLQGLLLLDA) form a helical membrane-spanning segment. Topologically, residues 76–94 (IQLACFQQMKDPLSHNYQA) are extracellular. Residues 95-115 (ILTLWMSANQVSLWLAACLSL) form a helical membrane-spanning segment. The Cytoplasmic portion of the chain corresponds to 116–142 (LYCAKIVRFSHTFPLHLASWVSRRFLQ). Residues 143–163 (MLLVALLFSGVCTALCLWDFF) form a helical membrane-spanning segment. Residues 164-198 (SRSHTVVTSMLHMNNTEFNLQIEKLNFFYSFVFCN) are Extracellular-facing. Asn177 carries N-linked (GlcNAc...) asparagine glycosylation. The chain crosses the membrane as a helical span at residues 199-219 (VGSVPPSLVFLISSGVLVISL). Residues 220–243 (GNHMRTMKSQTRGSRDPSLEAHVR) lie on the Cytoplasmic side of the membrane. Residues 244-264 (AIIFLVSFLCFYVVSFCAALI) form a helical membrane-spanning segment. Residues 265-276 (SIPLLVLWHNKG) lie on the Extracellular side of the membrane. The chain crosses the membrane as a helical span at residues 277-297 (GVMVCIGMMAACPSGHAAILI). Residues 298 to 331 (SGNAKLKKVIVTILFWFQSRQKVRRVHKVLPRIL) lie on the Cytoplasmic side of the membrane.

It belongs to the G-protein coupled receptor T2R family. As to expression, expressed in tongue, stomach and duodenum.

Its subcellular location is the membrane. Functionally, putative taste receptor which may play a role in the perception of bitterness. The polypeptide is Taste receptor type 2 member 38 (Tas2r38) (Rattus norvegicus (Rat)).